A 267-amino-acid polypeptide reads, in one-letter code: Probable beta-lactamase YbxI (267 aa).

Residues 1 to 23 form the signal peptide; that stretch reads MKKWIYVVLVLSIAGIGGFSVHA. The Acyl-ester intermediate role is filled by Ser76. The residue at position 79 (Lys79) is an N6-carboxylysine. Substrate is bound at residue 214-216; that stretch reads KTG.

The protein belongs to the class-D beta-lactamase family.

It catalyses the reaction a beta-lactam + H2O = a substituted beta-amino acid. This chain is Probable beta-lactamase YbxI (ybxI), found in Bacillus subtilis (strain 168).